The sequence spans 208 residues: Large ribosomal subunit protein uL3 (208 aa).

The interval 126–150 (NQSRGPMAHGSRYHRRPGSMGPVAP) is disordered.

This sequence belongs to the universal ribosomal protein uL3 family. In terms of assembly, part of the 50S ribosomal subunit. Forms a cluster with proteins L14 and L19.

In terms of biological role, one of the primary rRNA binding proteins, it binds directly near the 3'-end of the 23S rRNA, where it nucleates assembly of the 50S subunit. The protein is Large ribosomal subunit protein uL3 of Exiguobacterium sibiricum (strain DSM 17290 / CCUG 55495 / CIP 109462 / JCM 13490 / 255-15).